The primary structure comprises 413 residues: Replication factor C large subunit (413 aa).

Residue 54-61 (GPPGSGKT) coordinates ATP.

The protein belongs to the activator 1 small subunits family. RfcL subfamily. In terms of assembly, heteromultimer composed of small subunits (RfcS) and large subunits (RfcL).

In terms of biological role, part of the RFC clamp loader complex which loads the PCNA sliding clamp onto DNA. The polypeptide is Replication factor C large subunit (Thermofilum pendens (strain DSM 2475 / Hrk 5)).